A 24-amino-acid chain; its full sequence is Caerulein precursor fragment BM1 (24 aa).

In terms of tissue distribution, expressed by the skin glands.

The protein localises to the secreted. Antimicrobial peptide. The chain is Caerulein precursor fragment BM1 from Xenopus boumbaensis (Mawa clawed frog).